A 208-amino-acid polypeptide reads, in one-letter code: Histone H1.3 (208 aa).

An N-acetylserine modification is found at S2. In terms of domain architecture, H15 spans 37-113 (AHPPYINMVT…GASGRFRVTE (77 aa)). Residues 113-208 (EKKAAAAKKP…PAKKAVAPKT (96 aa)) form a disordered region. Composition is skewed to basic residues over residues 148–158 (KAKKTTATKTK) and 165–191 (KKVK…KSAP). The span at 192 to 208 (KKAAAAKPAKKAVAPKT) shows a compositional bias: low complexity.

It belongs to the histone H1/H5 family.

It is found in the nucleus. The protein resides in the chromosome. Histones H1 are necessary for the condensation of nucleosome chains into higher-order structures. The polypeptide is Histone H1.3 (hil-3) (Caenorhabditis elegans).